A 96-amino-acid chain; its full sequence is Putative pterin-4-alpha-carbinolamine dehydratase (96 aa).

This sequence belongs to the pterin-4-alpha-carbinolamine dehydratase family.

The catalysed reaction is (4aS,6R)-4a-hydroxy-L-erythro-5,6,7,8-tetrahydrobiopterin = (6R)-L-erythro-6,7-dihydrobiopterin + H2O. This chain is Putative pterin-4-alpha-carbinolamine dehydratase, found in Rhodospirillum rubrum (strain ATCC 11170 / ATH 1.1.1 / DSM 467 / LMG 4362 / NCIMB 8255 / S1).